Here is a 257-residue protein sequence, read N- to C-terminus: 7-carboxy-7-deazaguanine synthase (257 aa).

Substrate contacts are provided by residues 29 to 31 and Arg-44; that span reads LQG. The 219-residue stretch at 35-253 folds into the Radical SAM core domain; that stretch reads LAGTPSVFVR…PRLHVALWND (219 aa). Positions 48, 52, and 55 each coordinate [4Fe-4S] cluster. Ser-57 lines the Mg(2+) pocket. Position 90 (Thr-90) interacts with substrate. Gly-92 is an S-adenosyl-L-methionine binding site. The segment at 133–153 is disordered; sequence VSPKLASSTPTAETDPKGDGE.

It belongs to the radical SAM superfamily. 7-carboxy-7-deazaguanine synthase family. Homodimer. [4Fe-4S] cluster is required as a cofactor. S-adenosyl-L-methionine serves as cofactor. The cofactor is Mg(2+).

The catalysed reaction is 6-carboxy-5,6,7,8-tetrahydropterin + H(+) = 7-carboxy-7-deazaguanine + NH4(+). The protein operates within purine metabolism; 7-cyano-7-deazaguanine biosynthesis. Its function is as follows. Catalyzes the complex heterocyclic radical-mediated conversion of 6-carboxy-5,6,7,8-tetrahydropterin (CPH4) to 7-carboxy-7-deazaguanine (CDG), a step common to the biosynthetic pathways of all 7-deazapurine-containing compounds. The polypeptide is 7-carboxy-7-deazaguanine synthase (Halobacterium salinarum (strain ATCC 29341 / DSM 671 / R1)).